The chain runs to 293 residues: Pyridoxal 5'-phosphate synthase subunit PdxS (293 aa).

Asp23 serves as a coordination point for D-ribose 5-phosphate. The active-site Schiff-base intermediate with D-ribose 5-phosphate is the Lys80. Gly152 contacts D-ribose 5-phosphate. Arg164 is a D-glyceraldehyde 3-phosphate binding site. D-ribose 5-phosphate is bound by residues Gly213 and 234–235 (GS).

Belongs to the PdxS/SNZ family. In terms of assembly, in the presence of PdxT, forms a dodecamer of heterodimers.

The catalysed reaction is aldehydo-D-ribose 5-phosphate + D-glyceraldehyde 3-phosphate + L-glutamine = pyridoxal 5'-phosphate + L-glutamate + phosphate + 3 H2O + H(+). It functions in the pathway cofactor biosynthesis; pyridoxal 5'-phosphate biosynthesis. Its function is as follows. Catalyzes the formation of pyridoxal 5'-phosphate from ribose 5-phosphate (RBP), glyceraldehyde 3-phosphate (G3P) and ammonia. The ammonia is provided by the PdxT subunit. Can also use ribulose 5-phosphate and dihydroxyacetone phosphate as substrates, resulting from enzyme-catalyzed isomerization of RBP and G3P, respectively. In Syntrophus aciditrophicus (strain SB), this protein is Pyridoxal 5'-phosphate synthase subunit PdxS.